The primary structure comprises 496 residues: Glutamyl-tRNA(Gln) amidotransferase subunit A, mitochondrial (496 aa).

Catalysis depends on charge relay system residues Lys-75 and Ser-162. Ser-186 functions as the Acyl-ester intermediate in the catalytic mechanism.

Belongs to the amidase family. GatA subfamily. As to quaternary structure, subunit of the heterotrimeric GatCAB amidotransferase (AdT) complex, composed of A, B and C subunits.

It is found in the mitochondrion. The catalysed reaction is L-glutamyl-tRNA(Gln) + L-glutamine + ATP + H2O = L-glutaminyl-tRNA(Gln) + L-glutamate + ADP + phosphate + H(+). In terms of biological role, allows the formation of correctly charged Gln-tRNA(Gln) through the transamidation of misacylated Glu-tRNA(Gln) in the mitochondria. The reaction takes place in the presence of glutamine and ATP through an activated gamma-phospho-Glu-tRNA(Gln). This chain is Glutamyl-tRNA(Gln) amidotransferase subunit A, mitochondrial, found in Pediculus humanus subsp. corporis (Body louse).